The sequence spans 1176 residues: Translation initiation factor IF-2 (1176 aa).

Composition is skewed to low complexity over residues 32 to 44 (IAAKSHSSSISDS), 57 to 79 (ASPSQPTAPAAKPAPAKPAAGKS), 94 to 166 (APVA…AAPS), and 193 to 235 (KPTP…VKPT). Disordered stretches follow at residues 32 to 502 (IAAK…QRQK) and 535 to 567 (RPAKPKAQQRTAPKPVAAVRKRRKETARQRQRR). Residues 251-270 (APPPASTPRPAPSRPTPRPA) show a composition bias toward pro residues. Low complexity-rich tracts occupy residues 388 to 409 (GRPGAPTRPGAPTRPGMPGGMR) and 439 to 469 (NRPTEAAGTATPPVARPTAPSAPRRPGFRPG). Over residues 478–492 (GRPDWDDSAKLEALR) the composition is skewed to basic and acidic residues. A compositionally biased stretch (basic residues) spans 553–567 (VRKRRKETARQRQRR). The tr-type G domain occupies 668 to 840 (RRPPVVTVMG…LLLVTEVEDL (173 aa)). The interval 677-684 (GHVDHGKT) is G1. 677–684 (GHVDHGKT) serves as a coordination point for GTP. The segment at 702–706 (GITQH) is G2. Residues 727-730 (DTPG) are G3. Residues 727-731 (DTPGH) and 781-784 (NKID) each bind GTP. The G4 stretch occupies residues 781–784 (NKID). The G5 stretch occupies residues 817–819 (SAI).

It belongs to the TRAFAC class translation factor GTPase superfamily. Classic translation factor GTPase family. IF-2 subfamily.

The protein localises to the cytoplasm. In terms of biological role, one of the essential components for the initiation of protein synthesis. Protects formylmethionyl-tRNA from spontaneous hydrolysis and promotes its binding to the 30S ribosomal subunits. Also involved in the hydrolysis of GTP during the formation of the 70S ribosomal complex. The chain is Translation initiation factor IF-2 from Synechococcus sp. (strain CC9902).